A 532-amino-acid polypeptide reads, in one-letter code: Intercellular adhesion molecule 1 (532 aa).

The first 27 residues, 1–27 (MAPSSPRPALPALLVLLGALFPGPGNA), serve as a signal peptide directing secretion. Topologically, residues 28–480 (QTSVSPPKVI…TVNVLSPRYE (453 aa)) are extracellular. 2 consecutive Ig-like C2-type domains span residues 41–103 (GGSV…QSTA) and 128–193 (GKDL…LDLR). 3 disulfide bridges follow: Cys48–Cys92, Cys52–Cys96, and Cys135–Cys186. Asn145 is a glycosylation site (N-linked (GlcNAc...) asparagine). A Cell attachment site; atypical motif is present at residues 152 to 154 (RGE). Residues Asn183, Asn202, Asn267, and Asn296 are each glycosylated (N-linked (GlcNAc...) asparagine). Ig-like C2-type domains are found at residues 230 to 297 (DTQG…LGNQ) and 325 to 378 (GTEV…LEVA). Cys237 and Cys290 are oxidised to a cystine. A disulfide bond links Cys332 and Cys371. Asn385 and Asn406 each carry an N-linked (GlcNAc...) asparagine glycan. Cystine bridges form between Cys403-Cys419, Cys419-Cys457, and Cys431-Cys457. Residues 412-464 (NSQQTPMCQASGNPLPELKCLKDGTFPLPVGESVTVTRDLEGTYLCRARSTQG) enclose the Ig-like C2-type 5 domain. The chain crosses the membrane as a helical span at residues 481–503 (IVIITVVAAAVIMGTAGLSTYLY). At 504 to 532 (NRQRKIRKYRLQQAQKGTPMKPNTQATPP) the chain is on the cytoplasmic side. A phosphothreonine mark is found at Thr521 and Thr530.

Belongs to the immunoglobulin superfamily. ICAM family. As to quaternary structure, homodimer. Interacts with MUC1 and promotes cell aggregation in epithelial cells. Interacts with ARHGEF26/SGEF. Interacts (on T cell side) with CD81, CD247 and CD9 at immunological synapses between antigen-presenting cells and T cells. Post-translationally, monoubiquitinated, which is promoted by MARCH9 and leads to endocytosis.

Its subcellular location is the membrane. ICAM proteins are ligands for the leukocyte adhesion protein LFA-1 (integrin alpha-L/beta-2). During leukocyte trans-endothelial migration, ICAM1 engagement promotes the assembly of endothelial apical cups through ARHGEF26/SGEF and RHOG activation. This Pan paniscus (Pygmy chimpanzee) protein is Intercellular adhesion molecule 1 (ICAM1).